A 221-amino-acid polypeptide reads, in one-letter code: Urease accessory protein UreF (221 aa).

It belongs to the UreF family. As to quaternary structure, ureD, UreF and UreG form a complex that acts as a GTP-hydrolysis-dependent molecular chaperone, activating the urease apoprotein by helping to assemble the nickel containing metallocenter of UreC. The UreE protein probably delivers the nickel.

Its subcellular location is the cytoplasm. Functionally, required for maturation of urease via the functional incorporation of the urease nickel metallocenter. The protein is Urease accessory protein UreF of Aliivibrio fischeri (strain MJ11) (Vibrio fischeri).